Here is a 381-residue protein sequence, read N- to C-terminus: Cobalt-precorrin-5B C(1)-methyltransferase (381 aa).

It belongs to the CbiD family.

The enzyme catalyses Co-precorrin-5B + S-adenosyl-L-methionine = Co-precorrin-6A + S-adenosyl-L-homocysteine. It functions in the pathway cofactor biosynthesis; adenosylcobalamin biosynthesis; cob(II)yrinate a,c-diamide from sirohydrochlorin (anaerobic route): step 6/10. Catalyzes the methylation of C-1 in cobalt-precorrin-5B to form cobalt-precorrin-6A. This is Cobalt-precorrin-5B C(1)-methyltransferase from Prochlorococcus marinus (strain NATL1A).